Reading from the N-terminus, the 354-residue chain is 3-dehydroquinate synthase (354 aa).

NAD(+) is bound by residues Asp-39, Tyr-45, 68–71 (EKTK), 100–104 (GATGD), 124–125 (TT), Lys-136, Lys-145, and 163–166 (FLKT). Zn(2+)-binding residues include Glu-178, His-242, and His-256.

This sequence belongs to the sugar phosphate cyclases superfamily. Dehydroquinate synthase family. It depends on NAD(+) as a cofactor. Requires Co(2+) as cofactor. Zn(2+) serves as cofactor.

The protein resides in the cytoplasm. It catalyses the reaction 7-phospho-2-dehydro-3-deoxy-D-arabino-heptonate = 3-dehydroquinate + phosphate. It participates in metabolic intermediate biosynthesis; chorismate biosynthesis; chorismate from D-erythrose 4-phosphate and phosphoenolpyruvate: step 2/7. Catalyzes the conversion of 3-deoxy-D-arabino-heptulosonate 7-phosphate (DAHP) to dehydroquinate (DHQ). The protein is 3-dehydroquinate synthase of Staphylococcus aureus (strain MRSA252).